The primary structure comprises 132 residues: Small ribosomal subunit protein eS12 (132 aa).

This sequence belongs to the eukaryotic ribosomal protein eS12 family.

Its subcellular location is the cytoplasm. The polypeptide is Small ribosomal subunit protein eS12 (rps12) (Xenopus laevis (African clawed frog)).